Here is an 897-residue protein sequence, read N- to C-terminus: MNKNYKDTLLMPSTDFEMKANLATKESKIQQKWLDDQIYQLRLEKNQNNEQKILHDGPPYANGDIHVGHTMNKILKDVIVRRWLMQGYYSPFILGWDTHGLPIEHAVQSKLGQKEFFKLSVLERIEVCRDFAFNQVQKQKEQFSSLGLVTDFKVCYHTYDKQYEIDQLKVFAKMINEGLVYQDYKPIYWSWSSKSVLSDAEIEYKETKSPSIYVTFKTLDNEVIGKDVNLVIWTTTPWTLPSNLAISVHPELEYTLFEVNGQKYLVGSNLYEQLIAKFNFENPKVIQKLKGSSLDKIKYQHCLYDQITGIVVLGEHVSDSDGTGLVHTAPGFGLEDFIVCKKYGIDAYVPINDEGCFDQTVHDPELVGVFYDDANKLIAQKLEARNCLLSLNFINHQAAHDWRTKKPVIYRATKQWFINIKSIKNQLVENINTVKYPNERYAKRMLSMVAERSDWCISRQRTWGLPIPIIFDENHEPILDKELIDNTLRIMEAEGIKAWYEHDAKYFLTNKYDPRKTYYKESDILDVWFDSGTSFNVLKENGIKDKATIYFEGSDQYRGWFNSSMICATVLNKTAPYKELISHGFTLDEKGMKMSKSQGNVISPLTIIKNKGADILRLWAASIDYSNDHRIGNHIIEQNSEIYRKIRNSLFRYILGNLNDFDFKPLDQYQLSLADLLTINHVNKSFKKIDQAYLNYDYLEITKEVNQMVVELSAWYFELIKDSLYCNDENDPTRKAIQATLNYIFINSLFRIAPILVHTAEEAYSHYQATNKEKSVYLIDPPALFEIKTDLDLDQLATEFSKLKDDVYAEIEKLRKDKVLAKSNEAVVYLSKQYLDINKHLVKQLKTWLNVAEVHFTKNDQITVEKTDFSKCLRCWNYFKELSKNNNEVCQRCSELV.

The 'HIGH' region signature appears at 59–69 (PYANGDIHVGH). An L-isoleucyl-5'-AMP-binding site is contributed by glutamate 552. Positions 593–597 (KMSKS) match the 'KMSKS' region motif. Lysine 596 contributes to the ATP binding site. Zn(2+) contacts are provided by cysteine 872, cysteine 875, cysteine 890, and cysteine 893.

The protein belongs to the class-I aminoacyl-tRNA synthetase family. IleS type 1 subfamily. As to quaternary structure, monomer. Zn(2+) serves as cofactor.

It localises to the cytoplasm. The enzyme catalyses tRNA(Ile) + L-isoleucine + ATP = L-isoleucyl-tRNA(Ile) + AMP + diphosphate. Catalyzes the attachment of isoleucine to tRNA(Ile). As IleRS can inadvertently accommodate and process structurally similar amino acids such as valine, to avoid such errors it has two additional distinct tRNA(Ile)-dependent editing activities. One activity is designated as 'pretransfer' editing and involves the hydrolysis of activated Val-AMP. The other activity is designated 'posttransfer' editing and involves deacylation of mischarged Val-tRNA(Ile). This Mycoplasmoides gallisepticum (strain R(low / passage 15 / clone 2)) (Mycoplasma gallisepticum) protein is Isoleucine--tRNA ligase.